Here is a 160-residue protein sequence, read N- to C-terminus: Phosphopantetheine adenylyltransferase (160 aa).

Thr10 provides a ligand contact to substrate. ATP is bound by residues 10 to 11 and His18; that span reads TF. Substrate is bound by residues Lys42, Leu74, and Arg88. ATP is bound by residues 89-91, Glu99, and 124-130; these read GLR and NSFISST.

This sequence belongs to the bacterial CoaD family. Homohexamer. Requires Mg(2+) as cofactor.

It is found in the cytoplasm. It catalyses the reaction (R)-4'-phosphopantetheine + ATP + H(+) = 3'-dephospho-CoA + diphosphate. Its pathway is cofactor biosynthesis; coenzyme A biosynthesis; CoA from (R)-pantothenate: step 4/5. In terms of biological role, reversibly transfers an adenylyl group from ATP to 4'-phosphopantetheine, yielding dephospho-CoA (dPCoA) and pyrophosphate. The sequence is that of Phosphopantetheine adenylyltransferase from Aeromonas salmonicida (strain A449).